We begin with the raw amino-acid sequence, 174 residues long: Methylated-DNA--protein-cysteine methyltransferase (174 aa).

C144 serves as the catalytic Nucleophile; methyl group acceptor.

This sequence belongs to the MGMT family.

The protein localises to the cytoplasm. The catalysed reaction is a 6-O-methyl-2'-deoxyguanosine in DNA + L-cysteinyl-[protein] = S-methyl-L-cysteinyl-[protein] + a 2'-deoxyguanosine in DNA. It carries out the reaction a 4-O-methyl-thymidine in DNA + L-cysteinyl-[protein] = a thymidine in DNA + S-methyl-L-cysteinyl-[protein]. In terms of biological role, involved in the cellular defense against the biological effects of O6-methylguanine (O6-MeG) and O4-methylthymine (O4-MeT) in DNA. Repairs the methylated nucleobase in DNA by stoichiometrically transferring the methyl group to a cysteine residue in the enzyme. This is a suicide reaction: the enzyme is irreversibly inactivated. The polypeptide is Methylated-DNA--protein-cysteine methyltransferase (Pyrococcus furiosus (strain ATCC 43587 / DSM 3638 / JCM 8422 / Vc1)).